Reading from the N-terminus, the 269-residue chain is L-cystine-binding protein TcyJ (269 aa).

An N-terminal signal peptide occupies residues 1–20 (MNKRKGLVLLLSVFALLGGG). A lipid anchor (N-palmitoyl cysteine) is attached at cysteine 21. Cysteine 21 carries the S-diacylglycerol cysteine lipid modification.

Belongs to the bacterial solute-binding protein 3 family. The complex is composed of two ATP-binding proteins (TcyN), two transmembrane proteins (TcyL and TcyM) and two solute-binding proteins (TcyJ and TcyK).

It is found in the cell membrane. Functionally, part of the ABC transporter complex TcyJKLMN involved in L-cystine import. Is also involved in cystathionine, djenkolate, and S-methylcysteine transport. This chain is L-cystine-binding protein TcyJ (tcyJ), found in Bacillus subtilis (strain 168).